Consider the following 278-residue polypeptide: Energy-coupling factor transporter ATP-binding protein EcfA1 (278 aa).

One can recognise an ABC transporter domain in the interval 5–239; it reads IRVQHLNYTY…GMELLRLGLD (235 aa). 39–46 lines the ATP pocket; that stretch reads GHNGSGKS. Catalysis depends on Glu-165, which acts as the Proton acceptor.

This sequence belongs to the ABC transporter superfamily. Energy-coupling factor EcfA family. Forms a stable energy-coupling factor (ECF) transporter complex probably composed of 2 membrane-embedded substrate-binding proteins (S component), 2 ATP-binding proteins (A component) and 2 transmembrane proteins (T component). This complex interacts with a number of substrate-specific components, including FolT and ThiT for 5-formyltetrahydrofolate and thiamine respectively.

The protein resides in the cell membrane. Functionally, ATP-binding (A) component of a common energy-coupling factor (ECF) ABC-transporter complex. Unlike classic ABC transporters this ECF transporter provides the energy necessary to transport a number of different substrates including 5-formyltetrahydrofolate and thiamine. Expression of the complex plus FolT or ThiT in Lactococcus lactis subsp. cremoris (strain NZ9000) allows 5-formyltetrahydrofolate or thiamine uptake respectively; 5-formyltetrahydrofolate or thiamine are not taken up in the absence of FolT/ThiT or the EcfA1A2T complex. Deenergized L.lactis subsp. cremoris (treated with 2-deoxyglucose) does not take up substrate. This chain is Energy-coupling factor transporter ATP-binding protein EcfA1, found in Lacticaseibacillus paracasei (strain ATCC 334 / BCRC 17002 / CCUG 31169 / CIP 107868 / KCTC 3260 / NRRL B-441) (Lactobacillus paracasei).